We begin with the raw amino-acid sequence, 161 residues long: Tropomyosin (161 aa).

The stretch at 1 to 161 (MDKLREKINA…DEVHQALEDL (161 aa)) forms a coiled coil. Residues 40–52 (EQEYESLSRKSEA) are compositionally biased toward basic and acidic residues. Disordered stretches follow at residues 40-65 (EQEY…EETK) and 107-134 (EKMR…DDME).

As to quaternary structure, homodimer.

It is found in the cytoplasm. The protein resides in the cytoskeleton. Functionally, forms part of the F-actin contractile ring during cytokinesis. This chain is Tropomyosin (cdc8), found in Schizosaccharomyces pombe (strain 972 / ATCC 24843) (Fission yeast).